The chain runs to 181 residues: MTEYVVLVNEQGDAIGTMEKLEAHEKGLLHLAFSVLLYRETDLGKEFLLQKRAECKYHSKNKWSNTCCSHPRVNENVEVAGTRRLNEEIGITGVLPEQFVNLGWFIYQAELENGLSEHEQDYILIANTPDVSFILNPEEVSDIQWWSEADIEKEMKANPDTFSVWFPTVYKKVLTHLQQVN.

Residues histidine 24 and histidine 30 each coordinate Mn(2+). The Nudix hydrolase domain occupies 28–168 (LLHLAFSVLL…PDTFSVWFPT (141 aa)). Cysteine 68 is an active-site residue. Mg(2+) is bound at residue cysteine 68. Histidine 70 contacts Mn(2+). Glutamate 88 is a binding site for Mg(2+). Glutamate 117 and glutamate 119 together coordinate Mn(2+). Glutamate 119 is an active-site residue.

The protein belongs to the IPP isomerase type 1 family. The cofactor is Mg(2+). Requires Mn(2+) as cofactor.

It is found in the cytoplasm. The catalysed reaction is isopentenyl diphosphate = dimethylallyl diphosphate. The protein operates within isoprenoid biosynthesis; dimethylallyl diphosphate biosynthesis; dimethylallyl diphosphate from isopentenyl diphosphate: step 1/1. In terms of biological role, catalyzes the 1,3-allylic rearrangement of the homoallylic substrate isopentenyl (IPP) to its highly electrophilic allylic isomer, dimethylallyl diphosphate (DMAPP). This chain is Isopentenyl-diphosphate Delta-isomerase, found in Aliivibrio fischeri (strain ATCC 700601 / ES114) (Vibrio fischeri).